The sequence spans 452 residues: Exodeoxyribonuclease 7 large subunit (452 aa).

This sequence belongs to the XseA family. As to quaternary structure, heterooligomer composed of large and small subunits.

It is found in the cytoplasm. The enzyme catalyses Exonucleolytic cleavage in either 5'- to 3'- or 3'- to 5'-direction to yield nucleoside 5'-phosphates.. Functionally, bidirectionally degrades single-stranded DNA into large acid-insoluble oligonucleotides, which are then degraded further into small acid-soluble oligonucleotides. The chain is Exodeoxyribonuclease 7 large subunit from Lysinibacillus sphaericus (strain C3-41).